A 592-amino-acid polypeptide reads, in one-letter code: Colicin-A (592 aa).

Gly residues-rich tracts occupy residues 1–13 (MPGFNYGGKGDGT) and 23–34 (PEPGGGSHGNSG). Disordered stretches follow at residues 1 to 57 (MPGF…PGDS) and 373 to 395 (RQRQAEEAERQRQAMEVAEKAKD). Helical transmembrane passes span 528 to 548 (WVLSGIASSVALGIFSATLGA) and 555 to 575 (VPAIAVGIAGILLAAVVGALI).

Belongs to the channel forming colicin family.

It localises to the cell membrane. This colicin is a channel-forming colicin. This class of transmembrane toxins depolarize the cytoplasmic membrane, leading to dissipation of cellular energy. Functionally, colicins are polypeptide toxins produced by and active against E.coli and closely related bacteria. In Citrobacter freundii, this protein is Colicin-A (caa).